Reading from the N-terminus, the 351-residue chain is Uroporphyrinogen decarboxylase (351 aa).

Substrate is bound by residues R26–R30, D75, Y151, S206, and H321.

It belongs to the uroporphyrinogen decarboxylase family. As to quaternary structure, homodimer.

The protein localises to the cytoplasm. It carries out the reaction uroporphyrinogen III + 4 H(+) = coproporphyrinogen III + 4 CO2. Its pathway is porphyrin-containing compound metabolism; protoporphyrin-IX biosynthesis; coproporphyrinogen-III from 5-aminolevulinate: step 4/4. Functionally, catalyzes the decarboxylation of four acetate groups of uroporphyrinogen-III to yield coproporphyrinogen-III. In Koribacter versatilis (strain Ellin345), this protein is Uroporphyrinogen decarboxylase.